The primary structure comprises 82 residues: DNA-directed RNA polymerase subunit Rpo5 (82 aa).

The protein belongs to the archaeal Rpo5/eukaryotic RPB5 RNA polymerase subunit family. In terms of assembly, part of the RNA polymerase complex.

The protein localises to the cytoplasm. It catalyses the reaction RNA(n) + a ribonucleoside 5'-triphosphate = RNA(n+1) + diphosphate. In terms of biological role, DNA-dependent RNA polymerase (RNAP) catalyzes the transcription of DNA into RNA using the four ribonucleoside triphosphates as substrates. The protein is DNA-directed RNA polymerase subunit Rpo5 of Pyrococcus abyssi (strain GE5 / Orsay).